The following is a 210-amino-acid chain: Ribosomal RNA large subunit methyltransferase E (210 aa).

Residues Gly60, Trp62, Asp85, Asp101, and Asp126 each coordinate S-adenosyl-L-methionine. The Proton acceptor role is filled by Lys166. A compositionally biased stretch (basic and acidic residues) spans 191–200 (KPKASRDKSS). Residues 191-210 (KPKASRDKSSETFLVARDLK) form a disordered region.

Belongs to the class I-like SAM-binding methyltransferase superfamily. RNA methyltransferase RlmE family.

It localises to the cytoplasm. The enzyme catalyses uridine(2552) in 23S rRNA + S-adenosyl-L-methionine = 2'-O-methyluridine(2552) in 23S rRNA + S-adenosyl-L-homocysteine + H(+). Functionally, specifically methylates the uridine in position 2552 of 23S rRNA at the 2'-O position of the ribose in the fully assembled 50S ribosomal subunit. This chain is Ribosomal RNA large subunit methyltransferase E, found in Bordetella bronchiseptica (strain ATCC BAA-588 / NCTC 13252 / RB50) (Alcaligenes bronchisepticus).